Reading from the N-terminus, the 180-residue chain is ATP synthase subunit b (180 aa).

A helical membrane pass occupies residues 26–46 (IPLMLATLAALVISIFFLTYF).

The protein belongs to the ATPase B chain family. As to quaternary structure, F-type ATPases have 2 components, F(1) - the catalytic core - and F(0) - the membrane proton channel. F(1) has five subunits: alpha(3), beta(3), gamma(1), delta(1), epsilon(1). F(0) has three main subunits: a(1), b(2) and c(10-14). The alpha and beta chains form an alternating ring which encloses part of the gamma chain. F(1) is attached to F(0) by a central stalk formed by the gamma and epsilon chains, while a peripheral stalk is formed by the delta and b chains.

The protein resides in the cell membrane. Functionally, f(1)F(0) ATP synthase produces ATP from ADP in the presence of a proton or sodium gradient. F-type ATPases consist of two structural domains, F(1) containing the extramembraneous catalytic core and F(0) containing the membrane proton channel, linked together by a central stalk and a peripheral stalk. During catalysis, ATP synthesis in the catalytic domain of F(1) is coupled via a rotary mechanism of the central stalk subunits to proton translocation. In terms of biological role, component of the F(0) channel, it forms part of the peripheral stalk, linking F(1) to F(0). The chain is ATP synthase subunit b from Mycoplasmopsis pulmonis (strain UAB CTIP) (Mycoplasma pulmonis).